We begin with the raw amino-acid sequence, 593 residues long: Metal-response element-binding transcription factor 2 (593 aa).

A disordered region spans residues 1 to 35; it reads MRDSTGAGNSLVHKRSPLRRNQKTPTSLTKLSLQD. A compositionally biased stretch (basic residues) spans 12–22; it reads VHKRSPLRRNQ. The span at 23 to 32 shows a compositional bias: polar residues; sequence KTPTSLTKLS. T24 bears the Phosphothreonine mark. The Tudor domain maps to 44–101; the sequence is CKFEEGQDVLARWSDGLFYLGTIKKINILKQSCFIIFEDSSKSWVLWKDIQTGATGSG. PHD-type zinc fingers lie at residues 102 to 157 and 201 to 255; these read EMVC…CVFA and QCYC…CSSG. K360 participates in a covalent cross-link: Glycyl lysine isopeptide (Lys-Gly) (interchain with G-Cter in SUMO2). A compositionally biased stretch (basic and acidic residues) spans 360–374; it reads KAEKEPEGTSHEFKI. Disordered stretches follow at residues 360-411 and 424-486; these read KAEK…PYTR and KESI…TRTG. Over residues 445 to 454 the composition is skewed to polar residues; the sequence is TAHSSNTSDV. Position 452 is a phosphoserine (S452). Residues 459-471 are compositionally biased toward low complexity; it reads ASSAKETTSSSIS. K522 participates in a covalent cross-link: Glycyl lysine isopeptide (Lys-Gly) (interchain with G-Cter in SUMO2).

Belongs to the Polycomblike family. As to quaternary structure, associates with the PRC2 complex, which consists of the core components EED, EZH1 or EZH2, SUZ12, and RBBP4, and various combinations of accessory subunits including AEBP2, JARID2, PHF19, MTF2 and EPOP. Forms a dimeric PRC2.1 (class 1, PRC-PCL) complex consisting of at least SUZ12, RBBP4, and PHF19 or MTF2; PHF19 and MTF2 stabilize the dimeric structure which enhances PRC2 interaction with chromatin.

The protein resides in the nucleus. In terms of biological role, polycomb group (PcG) protein that specifically binds histone H3 trimethylated at 'Lys-36' (H3K36me3) and recruits the PRC2 complex, thus enhancing PRC2 H3K27me3 methylation activity. Regulates the transcriptional networks during embryonic stem cell self-renewal and differentiation. Promotes recruitment of the PRC2 complex to the inactive X chromosome in differentiating XX ES cells and PRC2 recruitment to target genes in undifferentiated ES cells. Required to repress Hox genes by enhancing H3K27me3 methylation of the PRC2 complex. In some conditions may act as an inhibitor of PRC2 activity: able to activate the CDKN2A gene and promote cellular senescence by suppressing the catalytic activity of the PRC2 complex locally. Binds to the metal-regulating-element (MRE) of MT1A gene promoter. The chain is Metal-response element-binding transcription factor 2 (MTF2) from Homo sapiens (Human).